The sequence spans 597 residues: Glutamine--fructose-6-phosphate aminotransferase [isomerizing] (597 aa).

Cys2 acts as the Nucleophile; for GATase activity in catalysis. One can recognise a Glutamine amidotransferase type-2 domain in the interval 2–218; sequence CGIVGYIGDS…ENSVGQISLE (217 aa). 2 SIS domains span residues 276–416 and 449–587; these read IDPE…QLGT and LSKR…VDHP. The active-site For Fru-6P isomerization activity is Lys592.

In terms of assembly, homodimer.

It localises to the cytoplasm. The catalysed reaction is D-fructose 6-phosphate + L-glutamine = D-glucosamine 6-phosphate + L-glutamate. Its function is as follows. Catalyzes the first step in hexosamine metabolism, converting fructose-6P into glucosamine-6P using glutamine as a nitrogen source. This is Glutamine--fructose-6-phosphate aminotransferase [isomerizing] from Helicobacter pylori (strain J99 / ATCC 700824) (Campylobacter pylori J99).